A 603-amino-acid polypeptide reads, in one-letter code: Myotubularin (603 aa).

Over residues 1–13 (MASASTSKYNSHS) the composition is skewed to polar residues. Positions 1-25 (MASASTSKYNSHSLENESIKRTSRD) are disordered. Phosphoserine is present on residues serine 13 and serine 18. Positions 14–25 (LENESIKRTSRD) are enriched in basic and acidic residues. A GRAM domain is found at 29–97 (RDLTEAVPRL…GVISRIEKMG (69 aa)). A Myotubularin phosphatase domain is found at 163 to 538 (GWTVYNPVEE…RHLELWVNYY (376 aa)). Residues asparagine 288, asparagine 313, and isoleucine 314 each contribute to the a 1,2-diacyl-sn-glycero-3-phospho-(1D-myo-inositol-3,5-bisphosphate) site. Asparagine 288, asparagine 313, and isoleucine 314 together coordinate a 1,2-diacyl-sn-glycero-3-phospho-(1D-myo-inositol-3-phosphate). The active-site Phosphocysteine intermediate is the cysteine 375. Serine 376, aspartate 377, glycine 378, tryptophan 379, aspartate 380, arginine 381, lysine 417, and arginine 421 together coordinate a 1,2-diacyl-sn-glycero-3-phospho-(1D-myo-inositol-3,5-bisphosphate). Residues serine 376, aspartate 377, glycine 378, tryptophan 379, aspartate 380, and arginine 381 each coordinate a 1,2-diacyl-sn-glycero-3-phospho-(1D-myo-inositol-3-phosphate). Arginine 421 contributes to the a 1,2-diacyl-sn-glycero-3-phospho-(1D-myo-inositol-3-phosphate) binding site. Residue threonine 495 is modified to Phosphothreonine. Residues 579–603 (SAKLSDPPTSPSSPSQMMPHVQTHF) are disordered. Serine 588 bears the Phosphoserine mark.

Belongs to the protein-tyrosine phosphatase family. Non-receptor class myotubularin subfamily. In terms of assembly, heterodimer with MTMR12. Interacts with KMT2A/MLL1 (via SET domain). Interacts with DES in skeletal muscle but not in cardiac muscle. Interacts with SPEG.

The protein localises to the cytoplasm. It is found in the cell membrane. Its subcellular location is the cell projection. It localises to the filopodium. The protein resides in the ruffle. The protein localises to the late endosome. It is found in the myofibril. Its subcellular location is the sarcomere. The enzyme catalyses a 1,2-diacyl-sn-glycero-3-phospho-(1D-myo-inositol-3-phosphate) + H2O = a 1,2-diacyl-sn-glycero-3-phospho-(1D-myo-inositol) + phosphate. It catalyses the reaction a 1,2-diacyl-sn-glycero-3-phospho-(1D-myo-inositol-3,5-bisphosphate) + H2O = a 1,2-diacyl-sn-glycero-3-phospho-(1D-myo-inositol-5-phosphate) + phosphate. The catalysed reaction is 1,2-dioctanoyl-sn-glycero-3-phospho-(1-D-myo-inositol-3-phosphate) + H2O = 1,2-dioctanoyl-sn-glycero-3-phospho-(1D-myo-inositol) + phosphate. It carries out the reaction 1,2-dioctanoyl-sn-glycero-3-phospho-(1D-myo-inositol-3,5-bisphosphate) + H2O = 1,2-dioctanoyl-sn-glycero-3-phospho-(1D-myo-inositol-5-phosphate) + phosphate. The enzyme catalyses 1,2-dihexadecanoyl-sn-glycero-3-phospho-(1D-myo-inositol-3,5-phosphate) + H2O = 1,2-dihexadecanoyl-sn-glycero-3-phospho-(1D-myo-inositol-5-phosphate) + phosphate. Allosterically activated by phosphatidylinositol 5-phosphate (PI5P). Lipid phosphatase which dephosphorylates phosphatidylinositol 3-monophosphate (PI3P) and phosphatidylinositol 3,5-bisphosphate (PI(3,5)P2). Has also been shown to dephosphorylate phosphotyrosine- and phosphoserine-containing peptides. Negatively regulates EGFR degradation through regulation of EGFR trafficking from the late endosome to the lysosome. Plays a role in vacuolar formation and morphology. Regulates desmin intermediate filament assembly and architecture. Plays a role in mitochondrial morphology and positioning. Required for skeletal muscle maintenance but not for myogenesis. In skeletal muscles, stabilizes MTMR12 protein levels. The polypeptide is Myotubularin (Pongo abelii (Sumatran orangutan)).